The chain runs to 277 residues: Large ribosomal subunit protein uL2c (277 aa).

The tract at residues 225–277 (MNPCDHPHGGGEGRSPIGRPKPVTPWGKPALGKKTRSPKRFSNKYIIRSRKMV) is disordered. Basic residues predominate over residues 255–277 (LGKKTRSPKRFSNKYIIRSRKMV).

This sequence belongs to the universal ribosomal protein uL2 family. Part of the 50S ribosomal subunit.

The protein localises to the plastid. The protein resides in the chloroplast. This is Large ribosomal subunit protein uL2c (rpl2) from Euglena gracilis.